The primary structure comprises 292 residues: uncharacterized protein (292 aa).

Catalysis depends on charge relay system residues S44 and Y106. Catalysis depends on Y132, which acts as the Proton donor. K161 serves as the catalytic Schiff-base intermediate with substrate.

This sequence belongs to the DapA family. As to quaternary structure, homotetramer.

Its subcellular location is the cytoplasm. This is an uncharacterized protein from Thermoplasma acidophilum (strain ATCC 25905 / DSM 1728 / JCM 9062 / NBRC 15155 / AMRC-C165).